The primary structure comprises 167 residues: NADH-quinone oxidoreductase subunit B (167 aa).

Residues cysteine 40, cysteine 41, cysteine 105, and cysteine 134 each coordinate [4Fe-4S] cluster.

It belongs to the complex I 20 kDa subunit family. NDH-1 is composed of 14 different subunits. Subunits NuoB, C, D, E, F, and G constitute the peripheral sector of the complex. [4Fe-4S] cluster serves as cofactor.

It is found in the cell inner membrane. It catalyses the reaction a quinone + NADH + 5 H(+)(in) = a quinol + NAD(+) + 4 H(+)(out). Its function is as follows. NDH-1 shuttles electrons from NADH, via FMN and iron-sulfur (Fe-S) centers, to quinones in the respiratory chain. The immediate electron acceptor for the enzyme in this species is believed to be ubiquinone. Couples the redox reaction to proton translocation (for every two electrons transferred, four hydrogen ions are translocated across the cytoplasmic membrane), and thus conserves the redox energy in a proton gradient. The chain is NADH-quinone oxidoreductase subunit B from Campylobacter jejuni subsp. jejuni serotype O:6 (strain 81116 / NCTC 11828).